Reading from the N-terminus, the 121-residue chain is Histone H2B.6 (121 aa).

Residues 1 to 28 (MAPKAEKKPKVEKRVPGKEGETSKKKAK) form a disordered region. Residues Lys7 and Lys13 each carry the N6-acetyllysine modification.

The protein belongs to the histone H2B family. The nucleosome is a histone octamer containing two molecules each of H2A, H2B, H3 and H4 assembled in one H3-H4 heterotetramer and two H2A-H2B heterodimers. The octamer wraps approximately 147 bp of DNA. Post-translationally, can be acetylated to form H2BK6ac and H2BK33ac. Expressed preferentially in meristematic tissues.

It is found in the nucleus. Its subcellular location is the chromosome. Functionally, core component of nucleosome. Nucleosomes wrap and compact DNA into chromatin, limiting DNA accessibility to the cellular machineries which require DNA as a template. Histones thereby play a central role in transcription regulation, DNA repair, DNA replication and chromosomal stability. DNA accessibility is regulated via a complex set of post-translational modifications of histones, also called histone code, and nucleosome remodeling. This is Histone H2B.6 (TH123) from Triticum aestivum (Wheat).